A 676-amino-acid polypeptide reads, in one-letter code: DNA ligase (676 aa).

NAD(+)-binding positions include 34–38 (DQEFD), 83–84 (SL), and Glu-117. Lys-119 acts as the N6-AMP-lysine intermediate in catalysis. NAD(+) contacts are provided by Arg-140, Glu-177, Lys-285, and Lys-309. Zn(2+) is bound by residues Cys-403, Cys-406, Cys-427, and Cys-434. The BRCT domain maps to 595 to 676 (NNNGLLKNKT…EWLKMLNKSG (82 aa)).

It belongs to the NAD-dependent DNA ligase family. LigA subfamily. Mg(2+) serves as cofactor. Requires Mn(2+) as cofactor.

The enzyme catalyses NAD(+) + (deoxyribonucleotide)n-3'-hydroxyl + 5'-phospho-(deoxyribonucleotide)m = (deoxyribonucleotide)n+m + AMP + beta-nicotinamide D-nucleotide.. In terms of biological role, DNA ligase that catalyzes the formation of phosphodiester linkages between 5'-phosphoryl and 3'-hydroxyl groups in double-stranded DNA using NAD as a coenzyme and as the energy source for the reaction. It is essential for DNA replication and repair of damaged DNA. The sequence is that of DNA ligase from Pelagibacter ubique (strain HTCC1062).